Here is a 131-residue protein sequence, read N- to C-terminus: MAKYEPKKGDYAGGAVKILDMFENGQLGYPEVTLKLAGEEANARRAGDERTKEAIHAIVKMISDAMKPYRNKGSGFQSQPIPGEVIAQVTSNPEYQQAKAFLASPATQVRNIEREEVLSKGAKKLAQAMAS.

Belongs to the viral ORF131/RIP family.

The protein localises to the virion. The polypeptide is Structural protein ORF131 (Acidianus convivator (ATV)).